The primary structure comprises 482 residues: Interferon-induced protein with tetratricopeptide repeats 5 (482 aa).

TPR repeat units lie at residues 51–84 (LALY…IQQE), 94–127 (LVTW…CKKL), 138–173 (PETD…EPDN), 181–214 (AITV…NPDN), 249–282 (PYVL…TPTS), 338–371 (AFAY…ENIT), 376–410 (HQIH…KDRS), and 435–468 (VQSL…DPEN). The tract at residues 254 to 260 (YAAKFYR) is interaction with the 5'-triphosphate group of PPP-RNA.

Belongs to the IFIT family. In terms of assembly, monomer. Interacts with MAP3K7 and the components of the IKK core complex CHUK, IKBKB and IKBKG; the interaction synergizes the recruitment of IKK to MAP3K7 and enhances IKK phosphorylation.

The protein resides in the cell projection. The protein localises to the ruffle membrane. In terms of biological role, interferon-induced RNA-binding protein involved in the human innate immune response. Has a broad and adaptable RNA structure recognition important for RNA recognition specificity in antiviral defense. Binds precursor and processed tRNAs as well as poly-U-tailed tRNA fragments. Specifically binds single-stranded RNA bearing a 5'-triphosphate group (PPP-RNA), thereby acting as a sensor of viral single-stranded RNAs. Single-stranded PPP-RNAs, which lack 2'-O-methylation of the 5' cap and bear a 5'-triphosphate group instead, are specific from viruses, providing a molecular signature to distinguish between self and non-self mRNAs by the host during viral infection. Directly binds PPP-RNA in a non-sequence-specific manner. Also recognizes and selectively binds AT-rich dsDNA. Additionally, as a mediator in innate immunity, positively regulates IKK-NFKB signaling by sinergizing the recruitment of IKK to MAP3K7. The chain is Interferon-induced protein with tetratricopeptide repeats 5 (IFIT5) from Homo sapiens (Human).